Consider the following 199-residue polypeptide: Holliday junction branch migration complex subunit RuvA (199 aa).

The domain I stretch occupies residues 1-63 (MIGCLIGEVF…EDAQQLYGFS (63 aa)). The segment at 64 to 142 (DAQEKTIFRT…TLAQGTSSAA (79 aa)) is domain II. The interval 143-150 (ALPQIQFV) is flexible linker. The domain III stretch occupies residues 150 to 199 (VSNSPVAEAEAALQSLGYKPLEAQKAVAAVKADYTESADIIRAALKSMMK).

The protein belongs to the RuvA family. Homotetramer. Forms an RuvA(8)-RuvB(12)-Holliday junction (HJ) complex. HJ DNA is sandwiched between 2 RuvA tetramers; dsDNA enters through RuvA and exits via RuvB. An RuvB hexamer assembles on each DNA strand where it exits the tetramer. Each RuvB hexamer is contacted by two RuvA subunits (via domain III) on 2 adjacent RuvB subunits; this complex drives branch migration. In the full resolvosome a probable DNA-RuvA(4)-RuvB(12)-RuvC(2) complex forms which resolves the HJ.

It is found in the cytoplasm. The RuvA-RuvB-RuvC complex processes Holliday junction (HJ) DNA during genetic recombination and DNA repair, while the RuvA-RuvB complex plays an important role in the rescue of blocked DNA replication forks via replication fork reversal (RFR). RuvA specifically binds to HJ cruciform DNA, conferring on it an open structure. The RuvB hexamer acts as an ATP-dependent pump, pulling dsDNA into and through the RuvAB complex. HJ branch migration allows RuvC to scan DNA until it finds its consensus sequence, where it cleaves and resolves the cruciform DNA. In Acinetobacter baumannii (strain AB307-0294), this protein is Holliday junction branch migration complex subunit RuvA.